The following is a 114-amino-acid chain: MTKGQGFGFGLGKIKELQEAFAKAQQVQAGAQQLQQELEQMEIEGFSEGKLVKVIMSGNQEPRSVTILPEALEKGADELSQLVTDAMKDAYTQSTETMRTKMEELTSGLNLPGL.

The protein belongs to the YbaB/EbfC family. Homodimer.

The protein resides in the cytoplasm. It is found in the nucleoid. Binds to DNA and alters its conformation. May be involved in regulation of gene expression, nucleoid organization and DNA protection. The sequence is that of Nucleoid-associated protein PCC8801_2554 from Rippkaea orientalis (strain PCC 8801 / RF-1) (Cyanothece sp. (strain PCC 8801)).